A 415-amino-acid polypeptide reads, in one-letter code: von Willebrand factor A domain-containing protein 1 (415 aa).

A signal peptide spans 1-18; the sequence is MLFWTVLSMALSLRLALA. The VWFA domain maps to 34-213; that stretch reads DLLFLLDSSA…ELRGAIIDAM (180 aa). Ser74, Ser80, and Ser93 each carry phosphoserine. 2 consecutive Fibronectin type-III domains span residues 214-305 and 307-405; these read QPHQ…LQEE and GPER…VPQA. Asn264 carries an N-linked (GlcNAc...) asparagine glycan. An intrachain disulfide couples Cys369 to Cys393.

In terms of assembly, homodimer or homomultimer; disulfide-linked. Interacts with HSPG2. Post-translationally, N-glycosylated.

The protein resides in the secreted. It is found in the extracellular space. The protein localises to the extracellular matrix. Its subcellular location is the basement membrane. Promotes matrix assembly. Involved in the organization of skeletal muscles and in the formation of neuromuscular junctions. This Rattus norvegicus (Rat) protein is von Willebrand factor A domain-containing protein 1 (Vwa1).